Consider the following 570-residue polypeptide: Molecular chaperone MKKS (570 aa).

Residue 192-199 (GHIILGKS) coordinates ATP. The tract at residues 198-370 (KSLIVPLKGQ…FHLIPNEATI (173 aa)) is substrate-binding apical domain.

Belongs to the TCP-1 chaperonin family. In terms of assembly, component of a complex composed at least of MKKS, BBS10, BBS12, TCP1, CCT2, CCT3, CCT4, CCT5 and CCT8. Interacts with STUB1. Interacts with BBS2 (via coiled coil domain). Interacts with CCDC28B. Interacts with BBS12. Interacts with SMARCC1, a component of the SWI/SNF complexes; the interaction takes place predominantly in the cytoplasm and may modulate SMARCC1 location. Interacts with DLEC1. As to expression, widely expressed in adult and fetal tissues.

Its subcellular location is the cytoplasm. The protein resides in the cytoskeleton. It localises to the microtubule organizing center. The protein localises to the centrosome. It is found in the cytosol. Its subcellular location is the nucleus. Probable molecular chaperone that assists the folding of proteins upon ATP hydrolysis. Plays a role in the assembly of BBSome, a complex involved in ciliogenesis regulating transports vesicles to the cilia. May play a role in protein processing in limb, cardiac and reproductive system development. May play a role in cytokinesis. This Homo sapiens (Human) protein is Molecular chaperone MKKS.